A 426-amino-acid polypeptide reads, in one-letter code: D-ribulose kinase (426 aa).

Substrate is bound by residues Asp-8, 12–15, Ser-72, and Asp-221; that span reads SGAR. ATP contacts are provided by residues Ser-243, Gly-281, and 376–380; that span reads GGAKN.

Belongs to the FGGY kinase family. A divalent metal cation serves as cofactor.

The enzyme catalyses D-ribulose + ATP = D-ribulose 5-phosphate + ADP + H(+). Exhibits ATP hydrolysis without substrate. Phosphorylates D-ribulose. This Synechococcus elongatus (strain ATCC 33912 / PCC 7942 / FACHB-805) (Anacystis nidulans R2) protein is D-ribulose kinase.